The sequence spans 349 residues: MSKAIKILLPLLLFSLSLQAERIKDIANIVGVRDNQLIGYGLVVGLNGTGDKTTSKFTMQSIANMLESVNVKIDADDIKSKNVAAVMVTAKLPPFSRQGDKVDVLVSSIGDAKSLEGGTLILTPLTGVDGRIYATSQGAISIGGKNERGGGVNHPLAGMLYGGAIIEREIPLDLYSKTGATLSLKSSNFQNAARVQESLNQNFGTQVAIAIDPRTIKLQRPESMSMVEFLARVEEVEIDYNRENKIVIDERTGTVVAGVGVKVGPVVVTHGEITIKITPEMSADNGAMDMGEGIKLSLNTNTLSTSGQTPTVSSVARALQRMGATPKDVISILEAIKRSGAISADLEIL.

The signal sequence occupies residues 1-20 (MSKAIKILLPLLLFSLSLQA).

This sequence belongs to the FlgI family. The basal body constitutes a major portion of the flagellar organelle and consists of four rings (L,P,S, and M) mounted on a central rod.

The protein resides in the periplasm. Its subcellular location is the bacterial flagellum basal body. Its function is as follows. Assembles around the rod to form the L-ring and probably protects the motor/basal body from shearing forces during rotation. The chain is Flagellar P-ring protein from Wolinella succinogenes (strain ATCC 29543 / DSM 1740 / CCUG 13145 / JCM 31913 / LMG 7466 / NCTC 11488 / FDC 602W) (Vibrio succinogenes).